Here is a 363-residue protein sequence, read N- to C-terminus: Forkhead box protein I1 (363 aa).

A compositionally biased stretch (low complexity) spans 1-18 (MNPVQQPAQQRSPASSLP). 3 disordered regions span residues 1–24 (MNPVQQPAQQRSPASSLPHPKRAQ), 210–269 (DNGN…SPPA), and 344–363 (TTAQKQPQFLQQPPLYQGRY). Residues 125-219 (RPPYSYSALI…DNGNFRRKRK (95 aa)) constitute a DNA-binding region (fork-head). Residues 231 to 243 (KIGEDHLNPKGKE) are compositionally biased toward basic and acidic residues. Composition is skewed to low complexity over residues 244 to 258 (SPPMITPSSPEEPSP) and 347 to 363 (QKQPQFLQQPPLYQGRY).

Its subcellular location is the nucleus. Its function is as follows. Transcription factor. Essential for ventral specification of the early cephalic (head) ectoderm during gastrulation, playing a role in the 'non-neural' versus 'neural' cell fate choice. Binds to DNA via the target sequence 5'-[AG]TAAA[CT]A-3', with 5'-ATAAACA-3' being the preferred binding site. The chain is Forkhead box protein I1 from Xenopus tropicalis (Western clawed frog).